The chain runs to 529 residues: Tyrosinase (529 aa).

Residues 1–18 form the signal peptide; sequence MLLAVLYCLLWSFQTSAG. Topologically, residues 19–476 are lumenal, melanosome; sequence HFPRACVSSK…YLEQASRIWS (458 aa). N-linked (GlcNAc...) asparagine glycans are attached at residues Asn-86, Asn-111, and Asn-161. Cu cation-binding residues include His-180, His-202, and His-211. A glycan (N-linked (GlcNAc...) asparagine) is linked at Asn-230. The interval 287–313 is disordered; sequence SLCNGTPEGPLRRNPGNHDKSRTPRLP. N-linked (GlcNAc...) asparagine glycosylation occurs at Asn-337. Residues His-363 and His-367 each contribute to the Cu cation site. A glycan (N-linked (GlcNAc...) asparagine) is linked at Asn-371. Residue His-390 coordinates Cu cation. Residues 477-497 traverse the membrane as a helical segment; that stretch reads WLLGAAMVGAVLTALLAGLVS. Over 498 to 529 the chain is Cytoplasmic; sequence LLCRHKRKQLPEEKQPLLMEKEDYHSLYQSHL.

The protein belongs to the tyrosinase family. As to quaternary structure, forms an OPN3-dependent complex with DCT in response to blue light in melanocytes. It depends on Cu(2+) as a cofactor. In terms of processing, glycosylated.

The protein localises to the melanosome membrane. The protein resides in the melanosome. It catalyses the reaction 2 L-dopa + O2 = 2 L-dopaquinone + 2 H2O. The catalysed reaction is L-tyrosine + O2 = L-dopaquinone + H2O. The enzyme catalyses 2 5,6-dihydroxyindole-2-carboxylate + O2 = 2 indole-5,6-quinone-2-carboxylate + 2 H2O. Functionally, this is a copper-containing oxidase that functions in the formation of pigments such as melanins and other polyphenolic compounds. Catalyzes the initial and rate limiting step in the cascade of reactions leading to melanin production from tyrosine. In addition to hydroxylating tyrosine to DOPA (3,4-dihydroxyphenylalanine), also catalyzes the oxidation of DOPA to DOPA-quinone, and possibly the oxidation of DHI (5,6-dihydroxyindole) to indole-5,6 quinone. The polypeptide is Tyrosinase (Homo sapiens (Human)).